The primary structure comprises 346 residues: UDP-N-acetylenolpyruvoylglucosamine reductase (346 aa).

The 172-residue stretch at 18–189 folds into the FAD-binding PCMH-type domain; it reads LRAQARAFIA…VSVVFALKTH (172 aa). The active site involves Arg-165. Ser-240 serves as the catalytic Proton donor. Glu-336 is a catalytic residue.

Belongs to the MurB family. FAD serves as cofactor.

The protein resides in the cytoplasm. The enzyme catalyses UDP-N-acetyl-alpha-D-muramate + NADP(+) = UDP-N-acetyl-3-O-(1-carboxyvinyl)-alpha-D-glucosamine + NADPH + H(+). It participates in cell wall biogenesis; peptidoglycan biosynthesis. Functionally, cell wall formation. The protein is UDP-N-acetylenolpyruvoylglucosamine reductase of Neisseria meningitidis serogroup A / serotype 4A (strain DSM 15465 / Z2491).